A 432-amino-acid polypeptide reads, in one-letter code: 3-phosphoshikimate 1-carboxyvinyltransferase (432 aa).

3 residues coordinate 3-phosphoshikimate: K22, S23, and R27. K22 is a phosphoenolpyruvate binding site. G96 and R127 together coordinate phosphoenolpyruvate. Residues S173, S174, Q175, S201, D317, N340, and K344 each contribute to the 3-phosphoshikimate site. Q175 provides a ligand contact to phosphoenolpyruvate. Catalysis depends on D317, which acts as the Proton acceptor. 3 residues coordinate phosphoenolpyruvate: R348, R392, and K417.

The protein belongs to the EPSP synthase family. In terms of assembly, monomer.

Its subcellular location is the cytoplasm. It carries out the reaction 3-phosphoshikimate + phosphoenolpyruvate = 5-O-(1-carboxyvinyl)-3-phosphoshikimate + phosphate. It participates in metabolic intermediate biosynthesis; chorismate biosynthesis; chorismate from D-erythrose 4-phosphate and phosphoenolpyruvate: step 6/7. Its function is as follows. Catalyzes the transfer of the enolpyruvyl moiety of phosphoenolpyruvate (PEP) to the 5-hydroxyl of shikimate-3-phosphate (S3P) to produce enolpyruvyl shikimate-3-phosphate and inorganic phosphate. The polypeptide is 3-phosphoshikimate 1-carboxyvinyltransferase (Mannheimia haemolytica (Pasteurella haemolytica)).